We begin with the raw amino-acid sequence, 430 residues long: Enolase (430 aa).

Gln-163 is a binding site for (2R)-2-phosphoglycerate. The Proton donor role is filled by Glu-205. Asp-242, Glu-287, and Asp-314 together coordinate Mg(2+). Residues Lys-339, Arg-368, Ser-369, and Lys-390 each coordinate (2R)-2-phosphoglycerate. The active-site Proton acceptor is Lys-339.

This sequence belongs to the enolase family. The cofactor is Mg(2+).

Its subcellular location is the cytoplasm. It localises to the secreted. It is found in the cell surface. It catalyses the reaction (2R)-2-phosphoglycerate = phosphoenolpyruvate + H2O. It functions in the pathway carbohydrate degradation; glycolysis; pyruvate from D-glyceraldehyde 3-phosphate: step 4/5. In terms of biological role, catalyzes the reversible conversion of 2-phosphoglycerate (2-PG) into phosphoenolpyruvate (PEP). It is essential for the degradation of carbohydrates via glycolysis. The polypeptide is Enolase (Geobacillus kaustophilus (strain HTA426)).